Here is a 30-residue protein sequence, read N- to C-terminus: Trypsin inhibitor 4 (30 aa).

Disulfide bonds link cysteine 3–cysteine 20, cysteine 10–cysteine 22, and cysteine 16–cysteine 29.

This sequence belongs to the protease inhibitor I7 (squash-type serine protease inhibitor) family.

It localises to the secreted. In terms of biological role, inhibits trypsin. This Cucumis sativus (Cucumber) protein is Trypsin inhibitor 4.